Here is an 86-residue protein sequence, read N- to C-terminus: Large ribosomal subunit protein bL27 (86 aa).

The segment covering 1 to 10 has biased composition (gly residues); that stretch reads MAQKKGGGST. Positions 1-21 are disordered; that stretch reads MAQKKGGGSTRNGRDSESKRL.

It belongs to the bacterial ribosomal protein bL27 family.

This Ralstonia nicotianae (strain ATCC BAA-1114 / GMI1000) (Ralstonia solanacearum) protein is Large ribosomal subunit protein bL27.